Reading from the N-terminus, the 73-residue chain is Translation initiation factor IF-1 (73 aa).

In terms of domain architecture, S1-like spans 1-73; the sequence is MPKKEGVIEI…TRGRIVYRYK (73 aa).

Belongs to the IF-1 family. As to quaternary structure, component of the 30S ribosomal translation pre-initiation complex which assembles on the 30S ribosome in the order IF-2 and IF-3, IF-1 and N-formylmethionyl-tRNA(fMet); mRNA recruitment can occur at any time during PIC assembly.

The protein resides in the cytoplasm. Functionally, one of the essential components for the initiation of protein synthesis. Stabilizes the binding of IF-2 and IF-3 on the 30S subunit to which N-formylmethionyl-tRNA(fMet) subsequently binds. Helps modulate mRNA selection, yielding the 30S pre-initiation complex (PIC). Upon addition of the 50S ribosomal subunit IF-1, IF-2 and IF-3 are released leaving the mature 70S translation initiation complex. The polypeptide is Translation initiation factor IF-1 (Nocardioides sp. (strain ATCC BAA-499 / JS614)).